Here is an 854-residue protein sequence, read N- to C-terminus: Protein ROOT HAIR DEFECTIVE 3 homolog 1 (854 aa).

Residues 1–680 lie on the Cytoplasmic side of the membrane; that stretch reads MDEAAAAEAV…QAHKRGNGRL (680 aa). The GB1/RHD3-type G domain occupies 37 to 252; that stretch reads GLSYAVVSIM…IAPGGLAGDR (216 aa). 47–54 is a binding site for GTP; sequence GPQSSGKS. A coiled-coil region spans residues 217-242; sequence ALPSFEEKEEQFREQVQQLRQRFSNS. A helical membrane pass occupies residues 681–701; that stretch reads PPPWAMVAIAVLGFNEIMTLL. Topologically, residues 702–704 are lumenal; the sequence is RNP. A helical transmembrane segment spans residues 705–725; it reads IYLFLLFVGYLLVKALAVQLD. Over 726–854 the chain is Cytoplasmic; it reads INREFQNGVV…NESNNAYSIV (129 aa). Composition is skewed to low complexity over residues 758 to 781 and 814 to 828; these read TEQQQQQGHHQDAAAEAPQQQQQP and VSPSPSSSSSTVTSP. The segment at 758–854 is disordered; that stretch reads TEQQQQQGHH…NESNNAYSIV (97 aa). The span at 842-854 shows a compositional bias: polar residues; the sequence is QPDNESNNAYSIV.

This sequence belongs to the TRAFAC class dynamin-like GTPase superfamily. GB1/RHD3 GTPase family. RHD3 subfamily.

Its subcellular location is the endoplasmic reticulum membrane. Functionally, probable GTP-binding protein that may be involved in cell development. This chain is Protein ROOT HAIR DEFECTIVE 3 homolog 1, found in Oryza sativa subsp. japonica (Rice).